Reading from the N-terminus, the 131-residue chain is Global transcriptional regulator Spx 2 (131 aa).

The cysteines at positions 10 and 13 are disulfide-linked.

This sequence belongs to the ArsC family. Spx subfamily. In terms of assembly, interacts with the C-terminal domain of the alpha subunit of the RNAP.

The protein resides in the cytoplasm. Global transcriptional regulator that plays a key role in stress response and exerts either positive or negative regulation of genes. Acts by interacting with the C-terminal domain of the alpha subunit of the RNA polymerase (RNAP). This interaction can enhance binding of RNAP to the promoter region of target genes and stimulate their transcription, or block interaction of RNAP with activator. The chain is Global transcriptional regulator Spx 2 from Bacillus cereus (strain ATCC 14579 / DSM 31 / CCUG 7414 / JCM 2152 / NBRC 15305 / NCIMB 9373 / NCTC 2599 / NRRL B-3711).